Consider the following 357-residue polypeptide: MAGNTIGQLFRVTTFGESHGIALGCIVDGVPPNLELSEKDIQPDLDRRKPGTSRYTTPRREDDEVQILSGVFEGKTTGTSIGMIIKNGDQRSQDYGDIKDRFRPGHADFTYQQKYGIRDYRGGGRSSARETAMRVAAGAIAKKYLREHFGIEVRGFLSQIGNIKIAPQKVGQIDWEKVNSNPFFCPDESAVEKFDELIRELKKEGDSIGAKLTVIAENVPVGLGEPVFDRLDADLAHALMGINAVKGVEIGDGFAVVKQRGSEHRDEMTPNGFESNHAGGILGGISSGQPIIATIALKPTSSITIPGRSINLNGKPVEVVTKGRHDPCVGIRAVPIAEAMVAIVLLDHLLRFKAQCK.

Positions 38-49 (EKDIQPDLDRRK) are enriched in basic and acidic residues. A disordered region spans residues 38–60 (EKDIQPDLDRRKPGTSRYTTPRR). Residues Arg48 and Arg54 each coordinate NADP(+). FMN contacts are provided by residues 125-127 (RSS), 243-244 (NA), Gly283, 298-302 (KPTSS), and Arg324.

This sequence belongs to the chorismate synthase family. In terms of assembly, homotetramer. Requires FMNH2 as cofactor.

It catalyses the reaction 5-O-(1-carboxyvinyl)-3-phosphoshikimate = chorismate + phosphate. Its pathway is metabolic intermediate biosynthesis; chorismate biosynthesis; chorismate from D-erythrose 4-phosphate and phosphoenolpyruvate: step 7/7. In terms of biological role, catalyzes the anti-1,4-elimination of the C-3 phosphate and the C-6 proR hydrogen from 5-enolpyruvylshikimate-3-phosphate (EPSP) to yield chorismate, which is the branch point compound that serves as the starting substrate for the three terminal pathways of aromatic amino acid biosynthesis. This reaction introduces a second double bond into the aromatic ring system. The sequence is that of Chorismate synthase from Haemophilus influenzae (strain PittEE).